Consider the following 280-residue polypeptide: Urease accessory protein UreD 1 (280 aa).

This sequence belongs to the UreD family. As to quaternary structure, ureD, UreF and UreG form a complex that acts as a GTP-hydrolysis-dependent molecular chaperone, activating the urease apoprotein by helping to assemble the nickel containing metallocenter of UreC. The UreE protein probably delivers the nickel.

It is found in the cytoplasm. In terms of biological role, required for maturation of urease via the functional incorporation of the urease nickel metallocenter. In Bradyrhizobium sp. (strain BTAi1 / ATCC BAA-1182), this protein is Urease accessory protein UreD 1.